A 445-amino-acid chain; its full sequence is UDP-N-acetylmuramate--L-alanine ligase (445 aa).

Residue Gly113 to Ser119 participates in ATP binding.

The protein belongs to the MurCDEF family.

It is found in the cytoplasm. It carries out the reaction UDP-N-acetyl-alpha-D-muramate + L-alanine + ATP = UDP-N-acetyl-alpha-D-muramoyl-L-alanine + ADP + phosphate + H(+). It functions in the pathway cell wall biogenesis; peptidoglycan biosynthesis. In terms of biological role, cell wall formation. The chain is UDP-N-acetylmuramate--L-alanine ligase from Enterococcus faecalis (strain ATCC 700802 / V583).